A 479-amino-acid chain; its full sequence is NADH-quinone oxidoreductase subunit N 2 (479 aa).

A run of 14 helical transmembrane segments spans residues 9–29 (WALASVPEIIVVTGACVLLIV), 40–60 (LLLWASVAIVLLAAVATLMLA), 75–95 (RFAVFFKLVFYLATILTFFLS), 110–130 (YVLLLFALVGMMIMASAIDLL), 131–151 (SIYVGLELMVLCTYVLTGFLR), 164–184 (VILGAVSTAIFLYGVSLIYGL), 206–226 (LLLAVVFIVAGLVFKIGAVPF), 238–258 (PTTITAFMSVAPKAAGFAVIL), 272–292 (WIIVAAIAVATMALGSFVALV), 299–319 (LLAYSSIAHAGFAIFGVVAGG), 326–346 (VMLYLLIYTFMNLGIFGAVIM), 371–391 (ALLMLLYLFSLAGIPPTAGFF), 404–424 (GFVALAVIAVLLSVVSAYFYI), and 449–469 (ATLAFTAAGTIGIGLFPAWFL).

The protein belongs to the complex I subunit 2 family. NDH-1 is composed of 14 different subunits. Subunits NuoA, H, J, K, L, M, N constitute the membrane sector of the complex.

Its subcellular location is the cell inner membrane. It catalyses the reaction a quinone + NADH + 5 H(+)(in) = a quinol + NAD(+) + 4 H(+)(out). NDH-1 shuttles electrons from NADH, via FMN and iron-sulfur (Fe-S) centers, to quinones in the respiratory chain. The immediate electron acceptor for the enzyme in this species is believed to be ubiquinone. Couples the redox reaction to proton translocation (for every two electrons transferred, four hydrogen ions are translocated across the cytoplasmic membrane), and thus conserves the redox energy in a proton gradient. This is NADH-quinone oxidoreductase subunit N 2 from Rhizobium meliloti (strain 1021) (Ensifer meliloti).